Consider the following 367-residue polypeptide: 3-methyl-2-oxobutanoate dehydrogenase subunit alpha (367 aa).

Thiamine diphosphate is bound by residues 99–101 (QYR), 141–142 (PI), 170–176 (GDGATSE), 200–204 (NQWAI), and His-269. Tyr-100 serves as a coordination point for substrate. 2 residues coordinate Mg(2+): Asp-171 and Asn-200.

As to quaternary structure, heteromer of E1 alpha (BkdA) and beta (BkdB) subunits. Part of the BCKADH complex, consisting of multiple copies of BkdA/BkdB (E1), BkdC (E2) and Lpd (E3). Mg(2+) serves as cofactor. Requires thiamine diphosphate as cofactor.

It carries out the reaction N(6)-[(R)-lipoyl]-L-lysyl-[protein] + 3-methyl-2-oxobutanoate + H(+) = N(6)-[(R)-S(8)-2-methylpropanoyldihydrolipoyl]-L-lysyl-[protein] + CO2. Component of the branched-chain alpha-ketoacid dehydrogenase (BCKADH) complex, that catalyzes the overall conversion of branched-chain alpha-ketoacids to acyl-CoA and CO(2). The chain is 3-methyl-2-oxobutanoate dehydrogenase subunit alpha (bkdA) from Mycobacterium tuberculosis (strain CDC 1551 / Oshkosh).